The sequence spans 404 residues: S-adenosylmethionine synthase (404 aa).

Glycine 139–aspartate 144 provides a ligand contact to ATP.

The protein belongs to the AdoMet synthase 2 family. Requires Mg(2+) as cofactor.

The enzyme catalyses L-methionine + ATP + H2O = S-adenosyl-L-methionine + phosphate + diphosphate. The protein operates within amino-acid biosynthesis; S-adenosyl-L-methionine biosynthesis; S-adenosyl-L-methionine from L-methionine: step 1/1. Its function is as follows. Catalyzes the formation of S-adenosylmethionine from methionine and ATP. The chain is S-adenosylmethionine synthase from Saccharolobus islandicus (strain L.S.2.15 / Lassen #1) (Sulfolobus islandicus).